Reading from the N-terminus, the 959-residue chain is Probable serine/threonine-protein kinase DDB_G0291664 (959 aa).

The interval 154 to 213 (QQQQQQQLTPPPSPPLLPIPQPPAQNEEQQLTQPPSIPPPQQKQIKIQKSDRGTQVKSIT) is disordered. The segment covering 162 to 176 (TPPPSPPLLPIPQPP) has biased composition (pro residues). ANK repeat units lie at residues 294-324 (KGETPLHSLILYNSESCLKKLVIAKINCMGI) and 333-362 (LNKNLLTHAIEKGDFEIIKLVLIGGCPLKM). A Protein kinase domain is found at 482 to 762 (IDFHTQIGSA…EVGIIETEFL (281 aa)). Residues 488 to 496 (IGSAGNASV) and Lys509 each bind ATP. Asp610 serves as the catalytic Proton acceptor. Positions 904-959 (NNINNNNNNNNNCNNSKKFKTTSESTSALGSDASSSSSPSSSSPSPKYSASIYHHQ) are disordered.

This sequence belongs to the protein kinase superfamily. Ser/Thr protein kinase family.

The catalysed reaction is L-seryl-[protein] + ATP = O-phospho-L-seryl-[protein] + ADP + H(+). It carries out the reaction L-threonyl-[protein] + ATP = O-phospho-L-threonyl-[protein] + ADP + H(+). The sequence is that of Probable serine/threonine-protein kinase DDB_G0291664 from Dictyostelium discoideum (Social amoeba).